A 298-amino-acid chain; its full sequence is ATP phosphoribosyltransferase (298 aa).

It belongs to the ATP phosphoribosyltransferase family. Long subfamily. Mg(2+) is required as a cofactor.

The protein localises to the cytoplasm. It catalyses the reaction 1-(5-phospho-beta-D-ribosyl)-ATP + diphosphate = 5-phospho-alpha-D-ribose 1-diphosphate + ATP. It functions in the pathway amino-acid biosynthesis; L-histidine biosynthesis; L-histidine from 5-phospho-alpha-D-ribose 1-diphosphate: step 1/9. Its activity is regulated as follows. Feedback inhibited by histidine. Functionally, catalyzes the condensation of ATP and 5-phosphoribose 1-diphosphate to form N'-(5'-phosphoribosyl)-ATP (PR-ATP). Has a crucial role in the pathway because the rate of histidine biosynthesis seems to be controlled primarily by regulation of HisG enzymatic activity. In Aliivibrio fischeri (strain MJ11) (Vibrio fischeri), this protein is ATP phosphoribosyltransferase.